Consider the following 122-residue polypeptide: Nuclear transport factor 2A (122 aa).

N-acetylmethionine is present on M1. Residues 6–119 (VAKAFVEHYY…YYVFNDIFRL (114 aa)) enclose the NTF2 domain.

Interacts with RAN1. As to expression, expressed in roots, stems, leaves and flowers, and, at low levels, in siliques.

The protein localises to the cytoplasm. It is found in the nucleus. Its subcellular location is the nucleus envelope. Functionally, facilitates protein transport into the nucleus. Interacts with various nucleoporins and with Ran-GDP. Could be part of a multicomponent system of cytosolic factors that assemble at the pore complex during nuclear import. The polypeptide is Nuclear transport factor 2A (Arabidopsis thaliana (Mouse-ear cress)).